The chain runs to 194 residues: dCTP deaminase (194 aa).

Residues 110–115 (RSSLAR), D128, 136–138 (VLE), Y171, K178, and Q182 contribute to the dCTP site. E138 functions as the Proton donor/acceptor in the catalytic mechanism. The segment at 172–194 (NKRKSAKYRDQQEAVASRISQDK) is disordered.

This sequence belongs to the dCTP deaminase family. In terms of assembly, homotrimer.

The catalysed reaction is dCTP + H2O + H(+) = dUTP + NH4(+). It participates in pyrimidine metabolism; dUMP biosynthesis; dUMP from dCTP (dUTP route): step 1/2. Its function is as follows. Catalyzes the deamination of dCTP to dUTP. The chain is dCTP deaminase from Shewanella loihica (strain ATCC BAA-1088 / PV-4).